Reading from the N-terminus, the 133-residue chain is MARVKRGVTAHAKHKKILKQAEGFYGRRKNTIRAAKAAVDRSKQYAYRDRKNRKRTFRALWIQRINAAVRMEGLTYGRFIDGLSKAGIEIDRKVLSDIAIHEPTVFSALVASAKKALEYLKDTTPNAFEGAVK.

Belongs to the bacterial ribosomal protein bL20 family.

Functionally, binds directly to 23S ribosomal RNA and is necessary for the in vitro assembly process of the 50S ribosomal subunit. It is not involved in the protein synthesizing functions of that subunit. The sequence is that of Large ribosomal subunit protein bL20 from Bartonella bacilliformis (strain ATCC 35685 / KC583 / Herrer 020/F12,63).